We begin with the raw amino-acid sequence, 296 residues long: DNA repair protein complementing XP-A cells homolog (296 aa).

Positions M1–S10 are enriched in polar residues. Residues M1 to R39 form a disordered region. Residues A26 to R39 are compositionally biased toward basic and acidic residues. The Nuclear localization signal signature appears at A26–P47. Zn(2+)-binding residues include C126, C129, C147, and C150. The segment at C126–C150 is a zinc-finger region.

This sequence belongs to the XPA family. Strongly expressed in the central nervous system and muscles.

The protein localises to the nucleus. Functionally, involved in DNA excision repair. Initiates repair by binding to damaged sites with various affinities, depending on the photoproduct and the transcriptional state of the region. This chain is DNA repair protein complementing XP-A cells homolog (Xpac), found in Drosophila melanogaster (Fruit fly).